The chain runs to 123 residues: Small ribosomal subunit protein uS12 (123 aa).

Aspartate 89 bears the 3-methylthioaspartic acid mark. The tract at residues 101-123 is disordered; the sequence is SLDTSGVKDRKQGRSKYGAKRPK. Basic residues predominate over residues 113 to 123; that stretch reads GRSKYGAKRPK.

This sequence belongs to the universal ribosomal protein uS12 family. Part of the 30S ribosomal subunit. Contacts proteins S8 and S17. May interact with IF1 in the 30S initiation complex.

With S4 and S5 plays an important role in translational accuracy. In terms of biological role, interacts with and stabilizes bases of the 16S rRNA that are involved in tRNA selection in the A site and with the mRNA backbone. Located at the interface of the 30S and 50S subunits, it traverses the body of the 30S subunit contacting proteins on the other side and probably holding the rRNA structure together. The combined cluster of proteins S8, S12 and S17 appears to hold together the shoulder and platform of the 30S subunit. The sequence is that of Small ribosomal subunit protein uS12 from Azotobacter vinelandii (strain DJ / ATCC BAA-1303).